The following is a 127-amino-acid chain: UPF0251 protein Ccel_0627 (127 aa).

Belongs to the UPF0251 family.

The sequence is that of UPF0251 protein Ccel_0627 from Ruminiclostridium cellulolyticum (strain ATCC 35319 / DSM 5812 / JCM 6584 / H10) (Clostridium cellulolyticum).